Consider the following 311-residue polypeptide: Ribosomal protein L11 methyltransferase (311 aa).

Residues Thr-160, Gly-181, Asp-203, and Asn-246 each coordinate S-adenosyl-L-methionine.

This sequence belongs to the methyltransferase superfamily. PrmA family.

It is found in the cytoplasm. The enzyme catalyses L-lysyl-[protein] + 3 S-adenosyl-L-methionine = N(6),N(6),N(6)-trimethyl-L-lysyl-[protein] + 3 S-adenosyl-L-homocysteine + 3 H(+). In terms of biological role, methylates ribosomal protein L11. This Macrococcus caseolyticus (strain JCSC5402) (Macrococcoides caseolyticum) protein is Ribosomal protein L11 methyltransferase.